Reading from the N-terminus, the 787-residue chain is Protein translocase subunit SecA (787 aa).

ATP contacts are provided by residues Gln85, 103-107 (GEGKT), and Asp492.

Belongs to the SecA family. In terms of assembly, monomer and homodimer. Part of the essential Sec protein translocation apparatus which comprises SecA, SecYEG and auxiliary proteins SecDF. Other proteins may also be involved.

The protein resides in the cell membrane. The protein localises to the cytoplasm. The catalysed reaction is ATP + H2O + cellular proteinSide 1 = ADP + phosphate + cellular proteinSide 2.. Functionally, part of the Sec protein translocase complex. Interacts with the SecYEG preprotein conducting channel. Has a central role in coupling the hydrolysis of ATP to the transfer of proteins into and across the cell membrane, serving as an ATP-driven molecular motor driving the stepwise translocation of polypeptide chains across the membrane. In Latilactobacillus sakei subsp. sakei (strain 23K) (Lactobacillus sakei subsp. sakei), this protein is Protein translocase subunit SecA.